The sequence spans 398 residues: Probable aminomethyltransferase (398 aa).

The protein belongs to the GcvT family. In terms of assembly, the glycine cleavage system is composed of four proteins: P, T, L and H.

The enzyme catalyses N(6)-[(R)-S(8)-aminomethyldihydrolipoyl]-L-lysyl-[protein] + (6S)-5,6,7,8-tetrahydrofolate = N(6)-[(R)-dihydrolipoyl]-L-lysyl-[protein] + (6R)-5,10-methylene-5,6,7,8-tetrahydrofolate + NH4(+). Functionally, the glycine cleavage system catalyzes the degradation of glycine. In Pyrococcus furiosus (strain ATCC 43587 / DSM 3638 / JCM 8422 / Vc1), this protein is Probable aminomethyltransferase.